A 351-amino-acid chain; its full sequence is Selenide, water dikinase (351 aa).

The active site involves selenocysteine 15. Position 15 (selenocysteine 15) is a non-standard amino acid, selenocysteine. ATP is bound by residues lysine 18 and 47-49; that span reads DNE. A Mg(2+)-binding site is contributed by aspartate 50. Residues aspartate 67, aspartate 90, and 138-140 each bind ATP; that span reads GHS. Aspartate 90 is a binding site for Mg(2+). Aspartate 227 contributes to the Mg(2+) binding site.

It belongs to the selenophosphate synthase 1 family. Class I subfamily. In terms of assembly, homodimer. Requires Mg(2+) as cofactor.

It carries out the reaction hydrogenselenide + ATP + H2O = selenophosphate + AMP + phosphate + 2 H(+). Synthesizes selenophosphate from selenide and ATP. The chain is Selenide, water dikinase from Nitratidesulfovibrio vulgaris (strain DP4) (Desulfovibrio vulgaris).